We begin with the raw amino-acid sequence, 89 residues long: Small ribosomal subunit protein uS15 (89 aa).

Belongs to the universal ribosomal protein uS15 family. Part of the 30S ribosomal subunit. Forms a bridge to the 50S subunit in the 70S ribosome, contacting the 23S rRNA.

Its function is as follows. One of the primary rRNA binding proteins, it binds directly to 16S rRNA where it helps nucleate assembly of the platform of the 30S subunit by binding and bridging several RNA helices of the 16S rRNA. Forms an intersubunit bridge (bridge B4) with the 23S rRNA of the 50S subunit in the ribosome. This Bradyrhizobium sp. (strain ORS 278) protein is Small ribosomal subunit protein uS15.